The primary structure comprises 831 residues: MWHPALGPGWKPLLALALALTSLRGVRGIEEEPNSGGSFQIVTFKWHHVQDPYIIALWILVASLAKIVFHLSHKVTSVVPESALLIVLGLVLGGIVWAADHIASFTLTPTLFFFYLLPPIVLDAGYFMPNRLFFGNLGTILLYAVIGTIWNAATTGLSLYGVFLSGLMGELKIGLLDFLLFGSLIAAVDPVAVLAVFEEVHVNEVLFIIVFGESLLNDAVTVVLYNVFESFVTLGGDAVTGVDCVKGIVSFFVVSLGGTLVGVIFAFLLSLVTRFTKHVRIIEPGFVFVISYLSYLTSEMLSLSAILAITFCGICCQKYVKANISEQSATTVRYTMKMLASGAETIIFMFLGISAVDPVIWTWNTAFVLLTLVFISVYRAIGVVLQTWILNRYRMVQLETIDQVVMSYGGLRGAVAYALVVLLDEKKVKEKNLFVSTTLIVVFFTVIFQGLTIKPLVQWLKVKRSEQREPKLNEKLHGRAFDHILSAIEDISGQIGHNYLRDKWSNFDRKFLSKVLMRRSAQKSRDRILNVFHELNLKDAISYVAEGERRGSLAFIRSPSTDNMVNVDFSTPRPSTVEASVSYFLRENVSAVCLDMQSLEQRRRSIRDTEDMVTHHTLQQYLYKPRQEYKHLYSRHELTPNEDEKQDKEIFHRTMRKRLESFKSAKLGINQNKKAAKLYKRERAQKRRNSSIPNGKLPMENLAHNFTIKEKDLELSEPEEATNYEEISGGIEFLASVTKDVASDSGAGIDNPVFSPDEDLDPSILSRVPPWLSPGETVVPSQRARVQIPNSPSNFRRLTPFRLSNKSVDSFLQADGPEEQLQPASPESTHM.

The N-terminal stretch at 1 to 28 (MWHPALGPGWKPLLALALALTSLRGVRG) is a signal peptide. Residues 29–48 (IEEEPNSGGSFQIVTFKWHH) are Extracellular-facing. Residues 49–71 (VQDPYIIALWILVASLAKIVFHL) form a helical membrane-spanning segment. The Cytoplasmic portion of the chain corresponds to 72–79 (SHKVTSVV). The helical transmembrane segment at 80–99 (PESALLIVLGLVLGGIVWAA) threads the bilayer. Residues 100–108 (DHIASFTLT) lie on the Extracellular side of the membrane. A helical transmembrane segment spans residues 109–126 (PTLFFFYLLPPIVLDAGY). The Cytoplasmic portion of the chain corresponds to 127 to 129 (FMP). A helical transmembrane segment spans residues 130 to 165 (NRLFFGNLGTILLYAVIGTIWNAATTGLSLYGVFLS). The a 1,2-diacyl-sn-glycero-3-phospho-(1D-myo-inositol) site is built by Gly135, Gly138, and Thr139. The Extracellular segment spans residues 166-178 (GLMGELKIGLLDF). A helical transmembrane segment spans residues 179-200 (LLFGSLIAAVDPVAVLAVFEEV). Topologically, residues 201 to 202 (HV) are cytoplasmic. A helical membrane pass occupies residues 203 to 234 (NEVLFIIVFGESLLNDAVTVVLYNVFESFVTL). The Extracellular segment spans residues 235–241 (GGDAVTG). A helical membrane pass occupies residues 242-276 (VDCVKGIVSFFVVSLGGTLVGVIFAFLLSLVTRFT). Residues 277–278 (KH) lie on the Cytoplasmic side of the membrane. A helical membrane pass occupies residues 279–301 (VRIIEPGFVFVISYLSYLTSEML). The Extracellular portion of the chain corresponds to 302 to 303 (SL). Residues 304–320 (SAILAITFCGICCQKYV) form a helical membrane-spanning segment. At 321 to 327 (KANISEQ) the chain is on the cytoplasmic side. A helical transmembrane segment spans residues 328–356 (SATTVRYTMKMLASGAETIIFMFLGISAV). Over 357–364 (DPVIWTWN) the chain is Extracellular. A helical transmembrane segment spans residues 365–386 (TAFVLLTLVFISVYRAIGVVLQ). Residues 387–399 (TWILNRYRMVQLE) are Cytoplasmic-facing. Met395 provides a ligand contact to a 1,2-diacyl-sn-glycero-3-phospho-(1D-myo-inositol). Residues 400–423 (TIDQVVMSYGGLRGAVAYALVVLL) traverse the membrane as a helical segment. At 424 to 430 (DEKKVKE) the chain is on the extracellular side. A helical membrane pass occupies residues 431–464 (KNLFVSTTLIVVFFTVIFQGLTIKPLVQWLKVKR). Residues 465–831 (SEQREPKLNE…QPASPESTHM (367 aa)) lie on the Cytoplasmic side of the membrane. A 1,2-diacyl-sn-glycero-3-phospho-(1D-myo-inositol)-binding residues include Gln494, Ile495, and His497. Ser552 and Ser560 each carry phosphoserine. Positions 573 to 587 (RPSTVEASVSYFLRE) are interaction with EZR. An interaction with NHERF4 region spans residues 588 to 665 (NVSAVCLDMQ…RKRLESFKSA (78 aa)). Positions 589-693 (VSAVCLDMQS…AQKRRNSSIP (105 aa)) are interaction with AHCYL1. Ser590 and Ser605 each carry phosphoserine. Phosphoserine; by SGK1 is present on Ser661. Phosphoserine occurs at positions 716, 807, and 810. Residues 808 to 831 (VDSFLQADGPEEQLQPASPESTHM) are disordered. Polar residues predominate over residues 822–831 (QPASPESTHM).

This sequence belongs to the monovalent cation:p,roton antiporter 1 (CPA1) transporter (TC 2.A.36) family. As to quaternary structure, homodimer. Found in the forms of complex and dynamic macromolecular complexes. Binds NHERF1 and NHERF2. Interacts with NHERF4 and interactions decrease in response to elevated calcium ion levels. Interacts with PDZK1 (via C-terminal PDZ domain). Interacts with CHP1; this interaction increases trafficking and activity at the plasma membrane of SLC9A3. Interacts with CHP2 and SHANK2. Interacts with AHCYL1; the interaction is required for SLC9A3 activity. Interacts with EZR; interaction targets SLC9A3 to the apical membrane. Interacts with SNX27 (via PDZ domains); directs SLC9A3 membrane insertion from early endosomes to the plasma membrane. In terms of processing, phosphorylated by PRKACA at Ser-552 and Ser-605, which inhibits activity. Phosphorylation of Ser-605 is essential for cAMP-mediated inhibition of SLC9A3. Phosphorylation at Ser-661 by SGK1 is associated with increased abundance at the cell membrane. Phosphorylation at Ser-716 by CSNK2A1 regulates SLC9A3 activity through the formation of multiple signaling complexes. Most abundant in colon and small intestine, followed by kidney and stomach. In kidney, expressed in proximal tubules and outer medulla (at protein level).

The protein localises to the apical cell membrane. It is found in the cell membrane. It localises to the recycling endosome membrane. Its subcellular location is the early endosome membrane. The enzyme catalyses Na(+)(in) + H(+)(out) = Na(+)(out) + H(+)(in). Its activity is regulated as follows. Seems to switch between active and inactive modes in response to various stimuli. Activated directly or indirectly by membrane phosphatidylinositol (PIs). Regulated by a variety of auxiliary proteins, which facilitate the maturation, cell surface expression and function of the transporter. Inhibited specifically by the drug tenapanor. Functionally, plasma membrane Na(+)/H(+) antiporter. Exchanges intracellular H(+) ions for extracellular Na(+) in 1:1 stoichiometry, playing a key role in salt and fluid absorption and pH homeostasis. Major apical Na(+)/H(+) exchanger in kidney and intestine playing an important role in renal and intestine Na(+) absorption and blood pressure regulation. This chain is Sodium/hydrogen exchanger 3 (Slc9a3), found in Rattus norvegicus (Rat).